A 158-amino-acid chain; its full sequence is Kelch repeat protein B10 (158 aa).

Kelch repeat units lie at residues 25 to 76 (TIFV…STFG) and 77 to 129 (MLYF…KLNN).

It belongs to the poxviruses Kelch family.

The sequence is that of Kelch repeat protein B10 from Vaccinia virus (strain Ankara) (VACV).